The primary structure comprises 437 residues: Protein farnesyltransferase subunit beta (437 aa).

PFTB repeat units lie at residues 123–164, 174–215, 222–263, 270–312, and 332–374; these read ATDV…CIIG, REKL…SLTN, FEGT…VILK, LKSL…PLLH, and QQAL…SIAQ. Residues 248–251 and 291–294 each bind (2E,6E)-farnesyl diphosphate; these read HGGY and RCNK. Positions 297 and 299 each coordinate Zn(2+). 300-303 lines the (2E,6E)-farnesyl diphosphate pocket; that stretch reads YSFW. His362 is a Zn(2+) binding site. Thr436 is modified (phosphothreonine).

Belongs to the protein prenyltransferase subunit beta family. In terms of assembly, heterodimer of FNTA and FNTB. The cofactor is Zn(2+).

The catalysed reaction is L-cysteinyl-[protein] + (2E,6E)-farnesyl diphosphate = S-(2E,6E)-farnesyl-L-cysteinyl-[protein] + diphosphate. Essential subunit of the farnesyltransferase complex. Catalyzes the transfer of a farnesyl moiety from farnesyl diphosphate to a cysteine at the fourth position from the C-terminus of several proteins having the C-terminal sequence Cys-aliphatic-aliphatic-X. The polypeptide is Protein farnesyltransferase subunit beta (FNTB) (Bos taurus (Bovine)).